The following is a 639-amino-acid chain: 2-oxoacid:ferredoxin oxidoreductase 1, subunit alpha (639 aa).

Residues tyrosine 266–proline 270 carry the YPITP motif motif. Positions 269 and 352 each coordinate substrate.

In terms of assembly, heterodimer composed of an alpha and a beta subunit.

It carries out the reaction a 2-oxocarboxylate + 2 oxidized [2Fe-2S]-[ferredoxin] + CoA = an acyl-CoA + 2 reduced [2Fe-2S]-[ferredoxin] + CO2 + H(+). In terms of biological role, catalyzes the coenzyme A-dependent oxidative decarboxylation of different 2-oxoacids such as pyruvate, 2-oxobutyrate and glyoxylate to form their CoA derivatives. In Aeropyrum pernix (strain ATCC 700893 / DSM 11879 / JCM 9820 / NBRC 100138 / K1), this protein is 2-oxoacid:ferredoxin oxidoreductase 1, subunit alpha.